An 85-amino-acid chain; its full sequence is uncharacterized protein (85 aa).

The protein belongs to the ycf76 family.

The protein localises to the plastid. It localises to the chloroplast. This is an uncharacterized protein from Oryza sativa subsp. japonica (Rice).